Reading from the N-terminus, the 703-residue chain is DNA ligase (703 aa).

NAD(+)-binding positions include 44-48 (DAEYD), 93-94 (SL), and E127. Residue K129 is the N6-AMP-lysine intermediate of the active site. R150, E186, K302, and K326 together coordinate NAD(+). The Zn(2+) site is built by C420, C422, C444, and C450. Residues 625–703 (VADSPVAGKT…EDMWFQRIGA (79 aa)) form the BRCT domain.

This sequence belongs to the NAD-dependent DNA ligase family. LigA subfamily. It depends on Mg(2+) as a cofactor. Requires Mn(2+) as cofactor.

It carries out the reaction NAD(+) + (deoxyribonucleotide)n-3'-hydroxyl + 5'-phospho-(deoxyribonucleotide)m = (deoxyribonucleotide)n+m + AMP + beta-nicotinamide D-nucleotide.. In terms of biological role, DNA ligase that catalyzes the formation of phosphodiester linkages between 5'-phosphoryl and 3'-hydroxyl groups in double-stranded DNA using NAD as a coenzyme and as the energy source for the reaction. It is essential for DNA replication and repair of damaged DNA. The chain is DNA ligase from Chelativorans sp. (strain BNC1).